Consider the following 526-residue polypeptide: Secreted triacylglycerol lipase LIP4 (526 aa).

The signal sequence occupies residues 1–26; it reads MVRLSYVRFGVAWCIAIIIVSGFSNA. N-linked (GlcNAc...) asparagine glycosylation is present at asparagine 186. Residue serine 195 is the Nucleophile of the active site. Asparagine 228 is a glycosylation site (N-linked (GlcNAc...) asparagine). Active-site residues include aspartate 342 and histidine 376. Asparagine 377 carries an N-linked (GlcNAc...) asparagine glycan. Residues 412-526 form a disordered region; the sequence is TGPSASSSAG…TMPAPPLMER (115 aa). Composition is skewed to low complexity over residues 413–423 and 430–457; these read GPSASSSAGGP and TGGHHTQSGSAHGGHSSEHAASSTHAPA. Residue asparagine 462 is glycosylated (N-linked (GlcNAc...) asparagine). Low complexity predominate over residues 480 to 490; that stretch reads PSTGATSPAPS. Over residues 516-526 the composition is skewed to pro residues; the sequence is RTMPAPPLMER.

Belongs to the AB hydrolase superfamily. Lipase family. Class Lip subfamily.

The protein resides in the secreted. It carries out the reaction a triacylglycerol + H2O = a diacylglycerol + a fatty acid + H(+). The catalysed reaction is a monoacylglycerol + H2O = glycerol + a fatty acid + H(+). It catalyses the reaction a diacylglycerol + H2O = a monoacylglycerol + a fatty acid + H(+). In terms of biological role, secreted lipase that hydrolyzes acylglycerol lipids such as triacylglycerols and consequently releases free fatty acid. Can hydrolyze 4-nitrophenyl palmitate to release 4-nitrophenol and palmitoic acid. Due to an absence of fatty acid synthase genes in Malassezia species, secretory lipases are essential for the yeast to generate free fatty acids from degradation of sebum and assimilate them as lipid sources for growth. Plays important roles not only in lipid metabolism but also in the immune response of host cells and pathogenesis. In Malassezia furfur (Pityriasis versicolor infection agent), this protein is Secreted triacylglycerol lipase LIP4.